Here is a 152-residue protein sequence, read N- to C-terminus: Large ribosomal subunit protein uL15 (152 aa).

The interval 1-54 (MGLKLNELSPGVGAKKTAHRKGRGIGSGLGKTGGRGVKGQKSRSGSGVRRGFEG) is disordered. Gly residues predominate over residues 24-37 (GIGSGLGKTGGRGV).

Belongs to the universal ribosomal protein uL15 family. In terms of assembly, part of the 50S ribosomal subunit.

Its function is as follows. Binds to the 23S rRNA. The protein is Large ribosomal subunit protein uL15 of Psychrobacter sp. (strain PRwf-1).